The chain runs to 227 residues: tRNA pseudouridine synthase B (227 aa).

The active-site Nucleophile is the Asp-42.

Belongs to the pseudouridine synthase TruB family. Type 1 subfamily.

It carries out the reaction uridine(55) in tRNA = pseudouridine(55) in tRNA. Functionally, responsible for synthesis of pseudouridine from uracil-55 in the psi GC loop of transfer RNAs. In Ureaplasma parvum serovar 3 (strain ATCC 27815 / 27 / NCTC 11736), this protein is tRNA pseudouridine synthase B.